Here is a 165-residue protein sequence, read N- to C-terminus: NADPH-dependent 7-cyano-7-deazaguanine reductase (165 aa).

The Thioimide intermediate role is filled by cysteine 56. Aspartate 63 serves as the catalytic Proton donor. Substrate contacts are provided by residues 78–80 and 97–98; these read VES and HE.

The protein belongs to the GTP cyclohydrolase I family. QueF type 1 subfamily.

The protein resides in the cytoplasm. The catalysed reaction is 7-aminomethyl-7-carbaguanine + 2 NADP(+) = 7-cyano-7-deazaguanine + 2 NADPH + 3 H(+). It participates in tRNA modification; tRNA-queuosine biosynthesis. Catalyzes the NADPH-dependent reduction of 7-cyano-7-deazaguanine (preQ0) to 7-aminomethyl-7-deazaguanine (preQ1). This chain is NADPH-dependent 7-cyano-7-deazaguanine reductase, found in Geobacillus thermodenitrificans (strain NG80-2).